We begin with the raw amino-acid sequence, 416 residues long: Gamma-glutamyl phosphate reductase (416 aa).

Belongs to the gamma-glutamyl phosphate reductase family.

The protein localises to the cytoplasm. The catalysed reaction is L-glutamate 5-semialdehyde + phosphate + NADP(+) = L-glutamyl 5-phosphate + NADPH + H(+). The protein operates within amino-acid biosynthesis; L-proline biosynthesis; L-glutamate 5-semialdehyde from L-glutamate: step 2/2. Catalyzes the NADPH-dependent reduction of L-glutamate 5-phosphate into L-glutamate 5-semialdehyde and phosphate. The product spontaneously undergoes cyclization to form 1-pyrroline-5-carboxylate. This is Gamma-glutamyl phosphate reductase from Leptospira interrogans serogroup Icterohaemorrhagiae serovar copenhageni (strain Fiocruz L1-130).